Consider the following 262-residue polypeptide: Deaminated glutathione amidase (262 aa).

Positions 1–238 constitute a CN hydrolase domain; the sequence is MLVAAGQFAV…PALIMAEVTP (238 aa). Residue E40 is the Proton acceptor of the active site. The Proton donor role is filled by K110. The active-site Nucleophile is the C147.

Belongs to the carbon-nitrogen hydrolase superfamily. NIT1/NIT2 family.

The catalysed reaction is N-(4-oxoglutaryl)-L-cysteinylglycine + H2O = L-cysteinylglycine + 2-oxoglutarate. In terms of biological role, hydrolyzes deaminated glutathione (dGSH) to 2-oxoglutarate and L-cysteinylglycine, and no activity on glutathione or L-glutamine. May function as a metabolite repair enzyme. The polypeptide is Deaminated glutathione amidase (ybeM) (Escherichia coli O157:H7).